Reading from the N-terminus, the 591-residue chain is MAGPAPGTIMGEDYFGNASEWGEEADGGQHQEDDSGEGEDDAEVQQECLHKFSTRDYIMEPSIFNTLKRYFQAGGSPENVIQLLSENYTAVAQTVNLLAEWLIQTGVEPVQVQETVENHLKSLLIKHFDPRKADSIFTEEGETPAWLEQMIAHTTWRDLFYKLAEAHPDCLMLNFTVKLISDAGYQGEITSVSTACQQLEVFSRVLRTSLATILDGGEENLEKNLPEFAKMVCHGEHTYLFAQAMMSVLAQEEQGGSAVRRVAQEVQRFAQEKGHDASQITLALGTAASYPRACQALGAMLSRGALNPADITVLFKMFTSMDPPPVELIRVPAFLDLFMQSLFKPGAKINQDHKHKYIHILAYAASVVETWKKNKRVSIGKDELKSTSKAIETVHNLCCNENKGASELVAELSTLYQCIRFPVVAMGVLKWVDWTVSEPRYFQLQTDHTPVHLALLDEISTCHQLLHPQVLQLLVKLFETEHSQLDVMEQLELKKTLLDRMVHLLSRGYVLPVVSYIRKCLEKLDTDISLIRYFVTEVLDVIAPPYTSDFVQLFLPILENDSIAGTIKAEGEHDPVTEFIAHCKSNFIVVN.

Residues 1–44 (MAGPAPGTIMGEDYFGNASEWGEEADGGQHQEDDSGEGEDDAEV) are disordered. Residues 34–44 (DSGEGEDDAEV) show a composition bias toward acidic residues.

It belongs to the NELF-D family. As to quaternary structure, the NELF complex is composed of NELFA, NELFB, NELFCD and NELFE; NELFA and NELFCD form a stable subcomplex that binds primarily through NELFCD to the N-terminus of NELFB. Binds RNA which may help to stabilize the NELF complex on nucleic acid. In vitro, the NELFA:NELFCD subcomplex binds to ssDNA and ssRNA in a sequence- and structure-dependent manner. Interacts with ARAF1. Interacts with PCF11. Interacts with NELFB. Interacts with KAT8.

The protein localises to the nucleus. In terms of biological role, essential component of the NELF complex, a complex that negatively regulates the elongation of transcription by RNA polymerase II. The NELF complex, which acts via an association with the DSIF complex and causes transcriptional pausing, is counteracted by the P-TEFb kinase complex. In Mus musculus (Mouse), this protein is Negative elongation factor D (Nelfcd).